The sequence spans 69 residues: Brevinin-1CG1 (69 aa).

The first 22 residues, 1–22, serve as a signal peptide directing secretion; that stretch reads MFTMKKSLLLLFFLGTINLSLC. The propeptide at 23–43 is removed in mature form; that stretch reads EQERNAEEERRDDDEMDVEVE. Cys63 and Cys69 are joined by a disulfide.

As to expression, expressed by the skin glands.

It localises to the secreted. In terms of biological role, antimicrobial peptide. Active against Gram-positive bacteria R.rhodochrous X15 and B.licheniformis X39 and against Gram-negative bacterium E.coli ATCC 25922. Has antifungal activity against a slime mold isolate. Has weak hemolytic activity against human erythrocytes. This chain is Brevinin-1CG1, found in Amolops chunganensis (Chungan torrent frog).